We begin with the raw amino-acid sequence, 244 residues long: Uridylate kinase (244 aa).

Position 15-18 (15-18 (KLSG)) interacts with ATP. The tract at residues 23 to 28 (GSEGFG) is involved in allosteric activation by GTP. Gly-57 provides a ligand contact to UMP. Residues Gly-58 and Arg-62 each coordinate ATP. Residues Asp-77 and 138–145 (TGNPFFTT) contribute to the UMP site. ATP is bound by residues Thr-165, Phe-171, and Asp-174.

This sequence belongs to the UMP kinase family. Homohexamer.

It localises to the cytoplasm. The catalysed reaction is UMP + ATP = UDP + ADP. It functions in the pathway pyrimidine metabolism; CTP biosynthesis via de novo pathway; UDP from UMP (UMPK route): step 1/1. With respect to regulation, allosterically activated by GTP. Inhibited by UTP. Its function is as follows. Catalyzes the reversible phosphorylation of UMP to UDP. The sequence is that of Uridylate kinase from Aeromonas hydrophila subsp. hydrophila (strain ATCC 7966 / DSM 30187 / BCRC 13018 / CCUG 14551 / JCM 1027 / KCTC 2358 / NCIMB 9240 / NCTC 8049).